A 258-amino-acid chain; its full sequence is Small ribosomal subunit protein uS2 (258 aa).

Residues 226 to 258 (QGVSNEEVAAEQNIDLDEKEKSEETEATEATEE) form a disordered region.

It belongs to the universal ribosomal protein uS2 family.

This chain is Small ribosomal subunit protein uS2, found in Staphylococcus aureus (strain COL).